Reading from the N-terminus, the 388-residue chain is MNLHEYQAKQLFAEYGLPVSEGFACDTPQEAAEAADKIGGDMWVVKTQVHAGGRGKAGGVKLVKSKEEIKEFAQHWLGKNLVTYQTDANGQPVAKILVESCTDIANELYLGAVVDRASQRVVFMASTEGGVDIEKIAEETPELIHQAEIDPLVGAQPYQARELGFKLGLNPTQMKQFVKIFMGLAKMFEDCDFALLEINPLVITDEGNLHCLDGKIGIDGNAIYRQPKMRAFHDPSQEDEREAHAAQWELNYVALDGTVGCMVNGAGLAMGTMDIVNLHGGKPANFLDVGGGANKERVSEAFKIILSDDNVKAVLVNIFGGIVRCDMIAEGIIGAVKEVGVKVPVVVRLEGTNAELGREVLKNSGLDIIAAESLTDAATKVVAAAEGK.

The 236-residue stretch at 9–244 (KQLFAEYGLP…PSQEDEREAH (236 aa)) folds into the ATP-grasp domain. Residues K46, 53–55 (GRG), E99, T102, and E107 contribute to the ATP site. Residues N199 and D213 each contribute to the Mg(2+) site. Substrate is bound by residues N264 and 321-323 (GIV).

Belongs to the succinate/malate CoA ligase beta subunit family. Heterotetramer of two alpha and two beta subunits. Mg(2+) is required as a cofactor.

The enzyme catalyses succinate + ATP + CoA = succinyl-CoA + ADP + phosphate. The catalysed reaction is GTP + succinate + CoA = succinyl-CoA + GDP + phosphate. The protein operates within carbohydrate metabolism; tricarboxylic acid cycle; succinate from succinyl-CoA (ligase route): step 1/1. Succinyl-CoA synthetase functions in the citric acid cycle (TCA), coupling the hydrolysis of succinyl-CoA to the synthesis of either ATP or GTP and thus represents the only step of substrate-level phosphorylation in the TCA. The beta subunit provides nucleotide specificity of the enzyme and binds the substrate succinate, while the binding sites for coenzyme A and phosphate are found in the alpha subunit. The polypeptide is Succinate--CoA ligase [ADP-forming] subunit beta (Colwellia psychrerythraea (strain 34H / ATCC BAA-681) (Vibrio psychroerythus)).